The primary structure comprises 227 residues: Protein lin-28 (227 aa).

A compositionally biased stretch (polar residues) spans 1-17; it reads MSTVVSEGRNDGNNRYS. The interval 1–27 is disordered; sequence MSTVVSEGRNDGNNRYSPQDEVEDRLP. The region spanning 52–120 is the CSD domain; it reads RYFGSCKWFN…GREAYAVSGE (69 aa). 2 consecutive CCHC-type zinc fingers follow at residues 143 to 160 and 166 to 183; these read RCFR…SCPN and KVCY…ICPE. Residues C144, C147, H153, C158, C168, C171, H176, and C181 each coordinate Zn(2+). Positions 181-227 are disordered; that stretch reads CPERRRKHRPEQVAAEEAEAARMAAEKSSPTTSDDDIREKNSNSSDE.

The protein belongs to the lin-28 family. In terms of assembly, component of a complex at least containing lep-2, lin-28 and the long non-coding RNA lep-5, which mediates the degradation of lin-28. In terms of processing, cleavage by caspase ced-3 during larval development probably induces lin-28 degradation.

It localises to the cytoplasm. Its function is as follows. Heterochronic protein which controls the choice of stage specific cell fates. Regulates the timing of the second larval stage events (L2 events) in the hypodermis. May negatively regulate the larval to adult transition via the suppression of the microRNA (miRNA) let-7 during L3. Through this regulatory role, controls the timing of the sexual maturation of the nervous system. Also has a role in the fox-1-sex-1-mediated determination of sexual fate. Plays a role in governing the developmental timing of male tail tip morphogenesis. Plays a role in controlling the seam cell number during larval stages. Plays a role in vulval development. The chain is Protein lin-28 from Caenorhabditis elegans.